The primary structure comprises 400 residues: Exodeoxyribonuclease 7 large subunit (400 aa).

It belongs to the XseA family. Heterooligomer composed of large and small subunits.

The protein resides in the cytoplasm. The enzyme catalyses Exonucleolytic cleavage in either 5'- to 3'- or 3'- to 5'-direction to yield nucleoside 5'-phosphates.. Its function is as follows. Bidirectionally degrades single-stranded DNA into large acid-insoluble oligonucleotides, which are then degraded further into small acid-soluble oligonucleotides. This Clostridium perfringens (strain SM101 / Type A) protein is Exodeoxyribonuclease 7 large subunit.